Reading from the N-terminus, the 497-residue chain is Arabinose import ATP-binding protein AraG (497 aa).

2 ABC transporter domains span residues 6 to 242 (LRFD…MVGR) and 250 to 497 (FRPR…ALPA). 38–45 (GENGAGKS) contacts ATP.

This sequence belongs to the ABC transporter superfamily. Arabinose importer (TC 3.A.1.2.2) family. The complex is composed of two ATP-binding proteins (AraG), two transmembrane proteins (AraH) and a solute-binding protein (AraF).

The protein resides in the cell inner membrane. The catalysed reaction is L-arabinose(out) + ATP + H2O = L-arabinose(in) + ADP + phosphate + H(+). Its function is as follows. Part of the ABC transporter complex AraFGH involved in arabinose import. Responsible for energy coupling to the transport system. The polypeptide is Arabinose import ATP-binding protein AraG (Chromohalobacter salexigens (strain ATCC BAA-138 / DSM 3043 / CIP 106854 / NCIMB 13768 / 1H11)).